Reading from the N-terminus, the 197-residue chain is Outer membrane protein 26 (197 aa).

An N-terminal signal peptide occupies residues 1 to 23 (MKNIAKVTALALGIALASGYASA).

It belongs to the Skp family.

It is found in the cell outer membrane. The protein is Outer membrane protein 26 (omp26) of Haemophilus influenzae (strain ATCC 51907 / DSM 11121 / KW20 / Rd).